An 88-amino-acid chain; its full sequence is Hemotin (88 aa).

Residues 1-14 (MDCFKVFEVVFQSE) are Lumenal-facing. Residues 15-37 (INPLLLIPAVATIALTLCCYCYH) traverse the membrane as a helical segment. Residues 38 to 88 (GYQWIRDRRTARIEEQQAQLPLPLSRISITPGCSMVATTKLTHSRNSVDIY) are Cytoplasmic-facing.

In terms of assembly, interacts with 14-3-3zeta. In terms of tissue distribution, expressed in hemocytes.

The protein localises to the early endosome membrane. In terms of biological role, negatively regulates early endosome maturation by binding to and repressing the activity of 14-3-3zeta which prevents the 14-3-3zeta-mediated activation of phosphoinositide 3-kinase Pi3K68D. This, in turn, inhibits the Pi3K68D-mediated conversion of phosphatidylinositol to phosphatidylinositol-3-phosphate and prevents progression of early endosomes through the maturation process which regulates subsequent steps of phagocytic processing. The protein is Hemotin of Drosophila melanogaster (Fruit fly).